The sequence spans 88 residues: AFAGVLADADIKAALAGCAAADSFNYKTFFKSPEEVKKFFAIIDQDHSGFIEEEELKLFLQTFSAGARALSDAETKIGVDEFATMVKX.

Position 1 is an N-acetylalanine (Ala1). The EF-hand domain maps to 31 to 66 (KSPEEVKKFFAIIDQDHSGFIEEEELKLFLQTFSAG). The Ca(2+) site is built by Asp44, Asp46, Ser48, Phe50, Glu52, Glu55, and Glu81.

This sequence belongs to the parvalbumin family.

Its function is as follows. In muscle, parvalbumin is thought to be involved in relaxation after contraction. It binds two calcium ions. This is Parvalbumin beta 3 from Merluccius productus (North Pacific hake).